A 116-amino-acid chain; its full sequence is Tachykinin-3 (116 aa).

The first 20 residues, 1–20, serve as a signal peptide directing secretion; that stretch reads MRSAMLFAAVLALSLAWTFG. Residues 21–79 constitute a propeptide that is removed on maturation; it reads AVCEEPQGQGGRLSKDSDLYQLPPSLLRRLYDSRPVSLEGLLKVLSKASVGPKETSLPQ. A Methionine amide modification is found at Met91. The interval 93-116 is disordered; sequence KRNSQPDTPTDVVEENTPSFGILK. Residues 95–116 constitute a propeptide that is removed on maturation; sequence NSQPDTPTDVVEENTPSFGILK.

It belongs to the tachykinin family.

Its subcellular location is the secreted. Its function is as follows. Tachykinins are active peptides which excite neurons, evoke behavioral responses, are potent vasodilators and secretagogues, and contract (directly or indirectly) many smooth muscles. Is a critical central regulator of gonadal function. The sequence is that of Tachykinin-3 (Tac3) from Mus musculus (Mouse).